Here is a 556-residue protein sequence, read N- to C-terminus: DNA ligase B (556 aa).

The active-site N6-AMP-lysine intermediate is lysine 124.

Belongs to the NAD-dependent DNA ligase family. LigB subfamily.

It catalyses the reaction NAD(+) + (deoxyribonucleotide)n-3'-hydroxyl + 5'-phospho-(deoxyribonucleotide)m = (deoxyribonucleotide)n+m + AMP + beta-nicotinamide D-nucleotide.. In terms of biological role, catalyzes the formation of phosphodiester linkages between 5'-phosphoryl and 3'-hydroxyl groups in double-stranded DNA using NAD as a coenzyme and as the energy source for the reaction. The protein is DNA ligase B of Pseudomonas fluorescens (strain ATCC BAA-477 / NRRL B-23932 / Pf-5).